A 368-amino-acid polypeptide reads, in one-letter code: MQNPREGMDLPQVIFSLVFIFIMIISSLWIMRPFFLGFAWASMVVVATWPIFLKLQILLWGNRACAVVMMTFSLLLVFIIPIVCLVNSLIDNSTSVISWLSSDKFRFPSLEWLQDIPIIGIKLFSSYQKLLNEGGAELITKVQPYMGKTTEFFVIQAGHFGRFILHLIFMLIFSALLYWNGEKVQSVIRHFAIRLGSKSGDSVVLLAGQAIRAVALGVVVTALVQGILSGIGLAISGIPYSSLLMMLIIIFCLVQLGPLPVLIPAIIWLYWNGKTTWGTVLLIWSCVVCILDHILRPILIRIGVDLPTVLILSGVIGGLIAFGMIGLFIGPVVLIISYRLISSWMDEIPAPNSLSKKSVQQLLFKKKN.

8 helical membrane-spanning segments follow: residues Val13–Phe35, Ala39–Gly61, Val68–Ile90, His159–Gly181, Leu216–Ile238, Ile248–Tyr270, Trp277–Leu299, and Gly314–Ile336.

Belongs to the autoinducer-2 exporter (AI-2E) (TC 2.A.86) family.

Its subcellular location is the cell membrane. The polypeptide is Putative transport protein bbp_117 (Buchnera aphidicola subsp. Baizongia pistaciae (strain Bp)).